A 111-amino-acid polypeptide reads, in one-letter code: MATLIAARTKRKAPRVRIFEVRERGHTYVTKNVTVEDGACVYLRNVIPNGETKALNNPCVLSTCYAADRKVNSTLCPNIGVDEGCHVEWTPDGVYPNCCPKHVCPSATASS.

A signal peptide spans 1–19 (MATLIAARTKRKAPRVRIF). 4 disulfides stabilise this stretch: Cys40/Cys64, Cys59/Cys98, Cys76/Cys99, and Cys85/Cys104.

This sequence belongs to the CirpT family. Expressed in salivary glands.

The protein localises to the secreted. Complement inhibitor. Prevents complement-mediated activation of C5 by sterically preventing direct binding of C5 to its convertase (binding with domains MG4 and MG5). Binds C5 at a different binding site than the other tick complement inhibitors OmCI and RaCI3, and the drug eculizumab. Inhibits the complement in human, rat and guinea pig, and also shows a reduced inhibition in rabbit and pig. This is Complement inhibitor CirpT1 from Rhipicephalus pulchellus (Yellow backed tick).